Consider the following 226-residue polypeptide: Cytochrome c biogenesis ATP-binding export protein CcmA (226 aa).

The region spanning 19 to 226 (LRANDLAFSR…LGGAHALPPA (208 aa)) is the ABC transporter domain. ATP is bound at residue 51 to 58 (GPNGSGKS).

The protein belongs to the ABC transporter superfamily. CcmA exporter (TC 3.A.1.107) family. As to quaternary structure, the complex is composed of two ATP-binding proteins (CcmA) and two transmembrane proteins (CcmB).

It is found in the cell inner membrane. The enzyme catalyses heme b(in) + ATP + H2O = heme b(out) + ADP + phosphate + H(+). Functionally, part of the ABC transporter complex CcmAB involved in the biogenesis of c-type cytochromes; once thought to export heme, this seems not to be the case, but its exact role is uncertain. Responsible for energy coupling to the transport system. This Cupriavidus pinatubonensis (strain JMP 134 / LMG 1197) (Cupriavidus necator (strain JMP 134)) protein is Cytochrome c biogenesis ATP-binding export protein CcmA.